The chain runs to 155 residues: uncharacterized protein (155 aa).

An HTH asnC-type domain is found at 4–65 (IDEVDEIILR…IIDHSFLGEF (62 aa)). The segment at residues 23–42 (LTELSRKVGLTPAAIKNRVE) is a DNA-binding region (H-T-H motif).

This is an uncharacterized protein from Pyrococcus furiosus (strain ATCC 43587 / DSM 3638 / JCM 8422 / Vc1).